A 1416-amino-acid polypeptide reads, in one-letter code: Non-structural polyprotein 1AB (1416 aa).

The stretch at Lys104 to Lys146 forms a coiled coil. 5 helical membrane passes run Met154–Ala174, Val239–Gly259, Val286–Val306, Leu313–Met333, and Gly344–Thr364. Active-site charge relay system; for serine protease activity residues include His461, Asp489, and Ser551. Residues Val587–Pro614 are a coiled coil. Tyr693 carries the O-(5'-phospho-RNA)-tyrosine modification. Positions Asn752 to Gly815 are disordered. Basic and acidic residues predominate over residues Ser783–Gln795. The segment covering Asn805–Tyr814 has biased composition (polar residues). Residues Lys1161–Glu1287 form the RdRp catalytic domain.

It belongs to the astroviridae polyprotein 1AB family. As to quaternary structure, monomer. In terms of processing, cleaved by the viral and host proteases. The protease is probably autocatalytically cleaved.

The protein resides in the host membrane. It catalyses the reaction RNA(n) + a ribonucleoside 5'-triphosphate = RNA(n+1) + diphosphate. In terms of biological role, responsible for the cleavage of the polyprotein into functional products. Protein covalently attached to the 5' extremity of the genomic and subgenomic RNAs. It may serve as a primer for the replicase. In Homo sapiens (Human), this protein is Non-structural polyprotein 1AB (ORF1).